Here is a 485-residue protein sequence, read N- to C-terminus: Aspartyl/glutamyl-tRNA(Asn/Gln) amidotransferase subunit B (485 aa).

This sequence belongs to the GatB/GatE family. GatB subfamily. As to quaternary structure, heterotrimer of A, B and C subunits.

It carries out the reaction L-glutamyl-tRNA(Gln) + L-glutamine + ATP + H2O = L-glutaminyl-tRNA(Gln) + L-glutamate + ADP + phosphate + H(+). The catalysed reaction is L-aspartyl-tRNA(Asn) + L-glutamine + ATP + H2O = L-asparaginyl-tRNA(Asn) + L-glutamate + ADP + phosphate + 2 H(+). Its function is as follows. Allows the formation of correctly charged Asn-tRNA(Asn) or Gln-tRNA(Gln) through the transamidation of misacylated Asp-tRNA(Asn) or Glu-tRNA(Gln) in organisms which lack either or both of asparaginyl-tRNA or glutaminyl-tRNA synthetases. The reaction takes place in the presence of glutamine and ATP through an activated phospho-Asp-tRNA(Asn) or phospho-Glu-tRNA(Gln). The polypeptide is Aspartyl/glutamyl-tRNA(Asn/Gln) amidotransferase subunit B (Methylacidiphilum infernorum (isolate V4) (Methylokorus infernorum (strain V4))).